Consider the following 217-residue polypeptide: Large ribosomal subunit protein bL25 (217 aa).

The protein belongs to the bacterial ribosomal protein bL25 family. CTC subfamily. Part of the 50S ribosomal subunit; part of the 5S rRNA/L5/L18/L25 subcomplex. Contacts the 5S rRNA. Binds to the 5S rRNA independently of L5 and L18.

This is one of the proteins that binds to the 5S RNA in the ribosome where it forms part of the central protuberance. This is Large ribosomal subunit protein bL25 from Methylobacterium sp. (strain 4-46).